We begin with the raw amino-acid sequence, 234 residues long: Ribonuclease HII (234 aa).

The 188-residue stretch at 47–234 (IRIAGVDEVG…KTVHKILYQE (188 aa)) folds into the RNase H type-2 domain. A divalent metal cation contacts are provided by aspartate 53, glutamate 54, and aspartate 144.

This sequence belongs to the RNase HII family. Mn(2+) is required as a cofactor. Requires Mg(2+) as cofactor.

The protein resides in the cytoplasm. The enzyme catalyses Endonucleolytic cleavage to 5'-phosphomonoester.. Functionally, endonuclease that specifically degrades the RNA of RNA-DNA hybrids. In Ruegeria pomeroyi (strain ATCC 700808 / DSM 15171 / DSS-3) (Silicibacter pomeroyi), this protein is Ribonuclease HII.